The following is a 483-amino-acid chain: Cyclic AMP-dependent transcription factor ATF-7 (483 aa).

The segment at 1–285 (MGDDRPFVCN…GMVVGTASTM (285 aa)) is transactivation domain. Residues 7-31 (FVCNAPGCGQRFTNEDHLAVHKHKH) form a C2H2-type zinc finger. The residue at position 51 (T51) is a Phosphothreonine; by MAPK11. Residues T53 and T101 each carry the phosphothreonine modification. K107 participates in a covalent cross-link: Glycyl lysine isopeptide (Lys-Gly) (interchain with G-Cter in SUMO1). Disordered stretches follow at residues 110–148 (EPVEVDSSPPDSPASSPCSPPLKEKEVTPKPVLISTPTP) and 299–345 (HPDA…NRAA). Low complexity-rich tracts occupy residues 114 to 126 (VDSSPPDSPASSP) and 307 to 320 (QPQVSPAQPTPSTG). The interval 325-483 (RTVDEDPDER…MTPQSQSAGR (159 aa)) is essential for binding adenovirus 2 E1A. Basic and acidic residues predominate over residues 326-343 (TVDEDPDERRQRFLERNR). The bZIP domain occupies 332-395 (DERRQRFLER…AQLKQLLLAH (64 aa)). Residues 334–354 (RRQRFLERNRAAASRCRQKRK) are basic motif. Positions 360 to 388 (LEKKAEELTSQNIQLSNEVTLLRNEVAQL) are leucine-zipper. The segment at 407-439 (TQGYLESPKESSEPTGSPAPVIQHSSATAPSNG) is disordered. Residues S413 and S423 each carry the phosphoserine modification. Residues 429 to 439 (QHSSATAPSNG) show a composition bias toward polar residues.

It belongs to the bZIP family. In terms of assembly, homodimer; binds DNA as homodimer. Heterodimer; heterodimerizes with other members of ATF family and with JUN family members. Interacts with JNK2; the interaction does not phosphorylate ATF7 but acts as a docking site for other ATF-associated partners such as JUN family members. Interacts (via its transactivation domain) with TAF12 (isoforms TAFII15 and TAFII20); the interaction potentiates the transactivation activity (isoform TAFII20 only) and is inhibited by ATF7 sumoylation. Interacts with TAF4; the interaction inhibits the TAF12-dependent transactivation. Interacts with MAPK9; the interaction does not phosphorylate ATF7 but acts as a docking site for ATF7-associated partners such as JUN. Interacts with Ku complex components XRCC6 and XRCC7. Interacts with TERT. As to quaternary structure, (Microbial infection) Interacts with adenovirus 2 E1A; the interaction enhances the ATF7-mediated viral transactivation activity which requires the zinc-binding domains of both E1A and ATF7. On EGF stimulation, phosphorylated first on Thr-53 allowing subsequent phosphorylation on Thr-51. This latter phosphorylation prevents sumoylation, increases binding to TAF12 and enhances transcriptional activity. Post-translationally, sumoylation delays nuclear localization and inhibits transactivation activity through preventing binding to TAF12. RANBP2 appears to be the specific E3 ligase. In terms of processing, on EGF stimulation, phosphorylated first on Thr-53 allowing subsequent phosphorylation on Thr-51. This latter phosphorylation prevents sumoylation, increases binding to TAF12 and enhances transcriptional activity. Social isolation stress as well as TNF-alpha also induce the phosphorylation of ATF7. Phosphorylated in proliferating colonic and small intestinal epithelial cells. Expressed in various tissues including heart, brain, placenta, lung and skeletal muscle. Highest levels in skeletal muscle. Lowest in lung and placenta. As to expression, strongly expressed in skeletal muscle. Also expressed at lower levels in heart and lung.

Its subcellular location is the nucleus. The protein resides in the nucleoplasm. It localises to the chromosome. The protein localises to the telomere. It is found in the cytoplasm. Its function is as follows. Stress-responsive chromatin regulator that plays a role in various biological processes including innate immunological memory, adipocyte differentiation or telomerase regulation. In absence of stress, contributes to the formation of heterochromatin and heterochromatin-like structure by recruiting histone H3K9 tri- and di-methyltransferases thus silencing the transcription of target genes such as STAT1 in adipocytes, or genes involved in innate immunity in macrophages and adipocytes. Stress induces ATF7 phosphorylation that disrupts interactions with histone methyltransferase and enhances the association with coactivators containing histone acetyltransferase and/or histone demethylase, leading to disruption of the heterochromatin-like structure and subsequently transcriptional activation. In response to TNF-alpha, which is induced by various stresses, phosphorylated ATF7 and telomerase are released from telomeres leading to telomere shortening. Also plays a role in maintaining epithelial regenerative capacity and protecting against cell death during intestinal epithelial damage and repair. In terms of biological role, acts as a dominant repressor of the E-selectin/NF-ELAM1/delta-A promoter. Acts as a negative regulator, inhibiting both ATF2 and ATF7 transcriptional activities. It may exert these effects by sequestrating in the cytoplasm the Thr-53 phosphorylating kinase, preventing activation. This chain is Cyclic AMP-dependent transcription factor ATF-7 (ATF7), found in Homo sapiens (Human).